Reading from the N-terminus, the 57-residue chain is MFTLKKSLLLLFFLGTINLSLCEQERNAEEERRDDLGERQAEVEKRFFPIVGKLLSG.

Residues 1 to 22 (MFTLKKSLLLLFFLGTINLSLC) form the signal peptide. Positions 23-46 (EQERNAEEERRDDLGERQAEVEKR) are excised as a propeptide. Serine 56 carries the serine amide modification.

Belongs to the frog skin active peptide (FSAP) family. Temporin subfamily. As to expression, expressed by the skin glands.

It localises to the secreted. In terms of biological role, antimicrobial peptide with weak activity against Gram-positive and Gram-negative bacteria and against fungi. Has been tested against S.aureus (MIC=15.0 ug/mL), B.pumilus (no activity detected), B.cereus (no activity detected), E.coli (MIC=30.0 ug/mL), B.dysenteriae (MIC=60.0 ug/mL), A.cacoaceticus (MIC=75.0 ug/mL), P.aeruginosa (MIC=25.0 ug/mL) and C.albicans (MIC=15.0 ug/mL). Also shows a weak hemolytic activity. The sequence is that of Temporin-ALk from Amolops loloensis (Lolokou Sucker Frog).